The primary structure comprises 676 residues: MSSAYELVSNYQPAGDQPQAIKTLNEGLENGLAHQTLLGVTGSGKTFTLANVIAHSGRPTIIMAHNKTLAAQLYGEMKAFFPNNAVEYFVSYFDYYQPEAYVPTTDTFIEKDSSVNEHIEQMRLSATKALLERKDAIIIASVSAIYGLGDPKAYLSMILHLRRGDIINQRDMLRRLAELQYKRNDMAFERGTFRVRGEVLDIFPAESEHEAIRIEMFDDEVERISKFDPLTGSIITKDMPRCTIYPKTHYVTPREQVLDAIEKIKVDLAIRQKELLENNKLVEEQRITQRTQFDIEMMNELGFCSGIENYSRYLSGRPEGEAPPTLFDYLPQDGLLIIDESHITVSQIGAMYKGDRSRKENLVEYGFRLPSALDNRPLRFEEFEALAPQTIYVSATPGKYEIEKSDGEIAEQVVRPTGLLDPVIEVRPVATQVDDLLSEIRIRTKNNERVLVTTLTKRMAEDLTEYLDEHGVKVRYLHSDIDTVERVEIIRDLRLGEFDVLVGINLLREGLDMPEVSLVAILDADKEGFLRSERSLIQTIGRAARNLEGKAILYADKITGSMEKAIGETERRREKQQLHNETLGIVPQALKKDVADILELGDMTKNKRKVVAPKIKLSEVAEEGASYSAMSPQQLEKAIQKLESKMYQHAKDLEFEQAAQVRDEIDNLRKQFIVNS.

One can recognise a Helicase ATP-binding domain in the interval 26–414; the sequence is EGLENGLAHQ…SDGEIAEQVV (389 aa). 39 to 46 serves as a coordination point for ATP; the sequence is GVTGSGKT. A Beta-hairpin motif is present at residues 92–115; sequence YFDYYQPEAYVPTTDTFIEKDSSV. Residues 432-598 form the Helicase C-terminal domain; sequence QVDDLLSEIR…ALKKDVADIL (167 aa). The 36-residue stretch at 636–671 folds into the UVR domain; that stretch reads EKAIQKLESKMYQHAKDLEFEQAAQVRDEIDNLRKQ.

The protein belongs to the UvrB family. Forms a heterotetramer with UvrA during the search for lesions. Interacts with UvrC in an incision complex.

It is found in the cytoplasm. The UvrABC repair system catalyzes the recognition and processing of DNA lesions. A damage recognition complex composed of 2 UvrA and 2 UvrB subunits scans DNA for abnormalities. Upon binding of the UvrA(2)B(2) complex to a putative damaged site, the DNA wraps around one UvrB monomer. DNA wrap is dependent on ATP binding by UvrB and probably causes local melting of the DNA helix, facilitating insertion of UvrB beta-hairpin between the DNA strands. Then UvrB probes one DNA strand for the presence of a lesion. If a lesion is found the UvrA subunits dissociate and the UvrB-DNA preincision complex is formed. This complex is subsequently bound by UvrC and the second UvrB is released. If no lesion is found, the DNA wraps around the other UvrB subunit that will check the other stand for damage. This Aliivibrio fischeri (strain ATCC 700601 / ES114) (Vibrio fischeri) protein is UvrABC system protein B.